The following is a 235-amino-acid chain: Superoxide dismutase [Mn] 3.1, mitochondrial (235 aa).

Residues 1–31 constitute a mitochondrion transit peptide; the sequence is MALRTLASKKVLSFPFGGAGRPLAAAASARG. Residues histidine 59, histidine 107, aspartate 196, and histidine 200 each coordinate Mn(2+).

This sequence belongs to the iron/manganese superoxide dismutase family. Homotetramer. Mn(2+) is required as a cofactor.

The protein localises to the mitochondrion matrix. The enzyme catalyses 2 superoxide + 2 H(+) = H2O2 + O2. Its function is as follows. Destroys superoxide anion radicals which are normally produced within the cells and which are toxic to biological systems. This Zea mays (Maize) protein is Superoxide dismutase [Mn] 3.1, mitochondrial (SODA.4).